A 126-amino-acid chain; its full sequence is MARVAGVDLPREKRIEIALTYIYGIGLTRSKEVLAQTGISADTRVKNLTEAEQSTLRDAIEKTFKVEGDLRSEVGQNIKRLMDIGAYRGLRHRRGLPVRGQRTKTNARTRKGPKKTVAGKKKATRK.

The tract at residues 92 to 126 is disordered; the sequence is HRRGLPVRGQRTKTNARTRKGPKKTVAGKKKATRK.

The protein belongs to the universal ribosomal protein uS13 family. As to quaternary structure, part of the 30S ribosomal subunit. Forms a loose heterodimer with protein S19. Forms two bridges to the 50S subunit in the 70S ribosome.

Functionally, located at the top of the head of the 30S subunit, it contacts several helices of the 16S rRNA. In the 70S ribosome it contacts the 23S rRNA (bridge B1a) and protein L5 of the 50S subunit (bridge B1b), connecting the 2 subunits; these bridges are implicated in subunit movement. Contacts the tRNAs in the A and P-sites. The polypeptide is Small ribosomal subunit protein uS13 (Deinococcus deserti (strain DSM 17065 / CIP 109153 / LMG 22923 / VCD115)).